The sequence spans 195 residues: Orotate phosphoribosyltransferase (195 aa).

Residue 117–125 (EDITTTGGS) coordinates 5-phospho-alpha-D-ribose 1-diphosphate. Orotate-binding residues include Thr-121 and Arg-149.

This sequence belongs to the purine/pyrimidine phosphoribosyltransferase family. PyrE subfamily. As to quaternary structure, homodimer. Requires Mg(2+) as cofactor.

The catalysed reaction is orotidine 5'-phosphate + diphosphate = orotate + 5-phospho-alpha-D-ribose 1-diphosphate. It functions in the pathway pyrimidine metabolism; UMP biosynthesis via de novo pathway; UMP from orotate: step 1/2. Functionally, catalyzes the transfer of a ribosyl phosphate group from 5-phosphoribose 1-diphosphate to orotate, leading to the formation of orotidine monophosphate (OMP). The polypeptide is Orotate phosphoribosyltransferase (Acidithiobacillus ferrooxidans (strain ATCC 53993 / BNL-5-31) (Leptospirillum ferrooxidans (ATCC 53993))).